Consider the following 2703-residue polypeptide: Serine/arginine repetitive matrix protein 2 (2703 aa).

An N-acetylmethionine modification is found at methionine 1. Residues histidine 60–alanine 92 are a coiled coil. Lysine 101 bears the N6-acetyllysine mark. Residues lysine 108 and lysine 130 each participate in a glycyl lysine isopeptide (Lys-Gly) (interchain with G-Cter in SUMO2) cross-link. The interval isoleucine 141 to valine 1007 is disordered. Tyrosine 145 is subject to Phosphotyrosine. Lysine 169 bears the N6-acetyllysine mark. Composition is skewed to basic residues over residues lysine 186–glycine 197 and arginine 207–arginine 249. Residues glycine 197 to arginine 259 are sufficient for RNA-binding. Residues serine 220 and serine 222 each carry the phosphoserine modification. The segment covering serine 263–alanine 284 has biased composition (low complexity). 5 positions are modified to phosphoserine: serine 295, serine 300, serine 310, serine 322, and serine 323. Low complexity predominate over residues glutamine 319–proline 334. Positions tyrosine 335–alanine 345 are enriched in basic and acidic residues. Phosphoserine occurs at positions 349, 351, 355, and 356. Residues threonine 357 and threonine 365 each carry the phosphothreonine modification. 20 positions are modified to phosphoserine: serine 375, serine 385, serine 393, serine 396, serine 402, serine 406, serine 422, serine 433, serine 434, serine 435, serine 438, serine 452, serine 482, serine 484, serine 503, serine 505, serine 507, serine 531, serine 533, and serine 540. Residues proline 383–serine 396 are compositionally biased toward polar residues. Polar residues predominate over residues proline 425–glutamate 437. Over residues asparagine 459–serine 533 the composition is skewed to basic residues. Residues proline 534–arginine 543 show a composition bias toward low complexity. 3 stretches are compositionally biased toward basic residues: residues asparagine 544–serine 561, glycine 568–arginine 721, and asparagine 730–arginine 740. Phosphoserine is present on residues serine 700, serine 702, and serine 704. Phosphoserine is present on residues serine 773, serine 775, and serine 778. Over residues serine 785 to proline 817 the composition is skewed to low complexity. Phosphoserine occurs at positions 821 and 829. Composition is skewed to polar residues over residues serine 829–serine 851 and arginine 859–lysine 874. Phosphothreonine is present on residues threonine 831 and threonine 841. A phosphoserine mark is found at serine 846, serine 850, and serine 851. 2 stretches are compositionally biased toward low complexity: residues serine 875–proline 891 and serine 898–threonine 919. Serine 882, serine 909, serine 924, serine 926, serine 928, serine 940, serine 942, serine 944, serine 945, serine 946, and serine 949 each carry phosphoserine. Residue threonine 955 is modified to Phosphothreonine. Polar residues predominate over residues serine 960–serine 1000. Phosphoserine occurs at positions 962 and 964. Tyrosine 966 bears the Phosphotyrosine mark. Phosphothreonine is present on threonine 973. 3 positions are modified to phosphoserine: serine 980, serine 984, and serine 993. Threonine 995 is subject to Phosphothreonine. Serine 997, serine 1000, serine 1011, serine 1037, and serine 1038 each carry phosphoserine. Positions valine 1024–threonine 1057 are enriched in polar residues. Residues valine 1024–leucine 1112 are disordered. Residue threonine 1044 is modified to Phosphothreonine. Serine 1048, serine 1064, serine 1066, serine 1067, and serine 1068 each carry phosphoserine. Low complexity predominate over residues serine 1058 to serine 1068. Threonine 1071 carries the post-translational modification Phosphothreonine. Phosphoserine occurs at positions 1077, 1087, 1094, 1097, 1117, 1151, 1159, 1175, 1188, 1216, 1225, 1229, 1230, 1269, 1276, 1278, 1284, 1287, 1294, 1305, 1325, 1338, 1339, 1340, 1343, 1359, and 1360. Residues valine 1079–leucine 1092 are compositionally biased toward basic and acidic residues. The interval isoleucine 1136 to glycine 2092 is disordered. A compositionally biased stretch (basic and acidic residues) spans proline 1146–glutamate 1158. Positions proline 1270–serine 1284 are enriched in basic and acidic residues. Residues phenylalanine 1285–phenylalanine 1304 are compositionally biased toward polar residues. A Phosphothreonine modification is found at threonine 1370. A compositionally biased stretch (basic and acidic residues) spans proline 1371–leucine 1387. Residues serine 1372, serine 1378, and serine 1380 each carry the phosphoserine modification. The residue at position 1390 (threonine 1390) is a Phosphothreonine. Positions serine 1397–glycine 1408 are enriched in low complexity. Residues serine 1400 and serine 1407 each carry the phosphoserine modification. Position 1409 is a phosphothreonine (threonine 1409). Residues threonine 1409 to arginine 1431 show a composition bias toward polar residues. Phosphoserine occurs at positions 1414, 1416, 1418, and 1419. The residue at position 1428 (threonine 1428) is a Phosphothreonine. 2 positions are modified to phosphoserine: serine 1438 and serine 1439. Threonine 1448 carries the phosphothreonine modification. A phosphoserine mark is found at serine 1453, serine 1455, serine 1457, serine 1458, and serine 1465. Over residues histidine 1454–proline 1468 the composition is skewed to polar residues. Threonine 1467 is subject to Phosphothreonine. Phosphoserine occurs at positions 1473, 1475, 1477, and 1478. A compositionally biased stretch (polar residues) spans serine 1475–proline 1489. Threonine 1487 is subject to Phosphothreonine. Low complexity predominate over residues glycine 1490 to glutamine 1499. 5 positions are modified to phosphoserine: serine 1493, serine 1495, serine 1497, serine 1498, and serine 1508. The segment covering glutamate 1511–proline 1523 has biased composition (basic and acidic residues). Basic residues predominate over residues lysine 1524–serine 1533. Residues serine 1533, serine 1535, serine 1537, serine 1538, serine 1554, serine 1556, serine 1557, serine 1572, serine 1576, serine 1577, serine 1604, serine 1614, serine 1647, serine 1649, and serine 1650 each carry the phosphoserine modification. The span at serine 1604 to serine 1613 shows a compositional bias: low complexity. The segment covering lysine 1637 to serine 1647 has biased composition (basic residues). Phosphothreonine is present on threonine 1654. A phosphoserine mark is found at serine 1683, serine 1685, serine 1687, serine 1688, serine 1718, and serine 1720. Composition is skewed to basic residues over residues glycine 1725–aspartate 1745 and serine 1754–glycine 1772. A phosphoserine mark is found at serine 1774, serine 1778, serine 1810, serine 1813, serine 1832, and serine 1834. Over residues tyrosine 1776–threonine 1789 the composition is skewed to low complexity. Residues serine 1790–serine 1810 show a composition bias toward basic residues. The segment covering lysine 1818–leucine 2020 has biased composition (basic residues). The residue at position 1836 (threonine 1836) is a Phosphothreonine. Phosphoserine occurs at positions 1840 and 1846. The residue at position 1848 (threonine 1848) is a Phosphothreonine. A phosphoserine mark is found at serine 1849, serine 1869, serine 1872, serine 1876, and serine 1878. Threonine 1880 and threonine 1884 each carry phosphothreonine. Residues serine 1898 and serine 1900 each carry the phosphoserine modification. Phosphothreonine occurs at positions 1902 and 1906. Serine 1910 and serine 1912 each carry phosphoserine. A phosphothreonine mark is found at threonine 1914 and threonine 1918. A phosphoserine mark is found at serine 1922, serine 1924, and serine 1927. Phosphothreonine is present on threonine 1930. Serine 1936, serine 1939, serine 1948, serine 1951, serine 1960, serine 1963, serine 1970, and serine 1972 each carry phosphoserine. The residue at position 1974 (threonine 1974) is a Phosphothreonine. Phosphoserine is present on residues serine 1982 and serine 1984. At threonine 1986 the chain carries Phosphothreonine. Serine 1994, serine 1996, serine 1998, and serine 2019 each carry phosphoserine. Threonine 2021 is modified (phosphothreonine). Positions arginine 2022–alanine 2047 are enriched in low complexity. Phosphoserine is present on residues serine 2023 and serine 2042. Threonine 2044 bears the Phosphothreonine mark. Serine 2052 and serine 2054 each carry phosphoserine. Phosphothreonine is present on threonine 2056. A compositionally biased stretch (low complexity) spans serine 2062–proline 2076. 4 positions are modified to phosphoserine: serine 2070, serine 2073, serine 2075, and serine 2084. At threonine 2096 the chain carries Phosphothreonine. Arginine 2146, arginine 2159, arginine 2183, and arginine 2198 each carry omega-N-methylarginine. Serine 2224 is modified (phosphoserine). Omega-N-methylarginine occurs at positions 2226 and 2240. 2 positions are modified to phosphothreonine: threonine 2241 and threonine 2254. A Phosphoserine modification is found at serine 2262. The disordered stretch occupies residues leucine 2263 to proline 2703. Phosphothreonine occurs at positions 2268 and 2281. The segment covering proline 2269–glutamine 2283 has biased composition (polar residues). An Omega-N-methylarginine modification is found at arginine 2295. Phosphoserine occurs at positions 2296, 2321, and 2329. Threonine 2334 carries the post-translational modification Phosphothreonine. At serine 2335 the chain carries Phosphoserine. Position 2337 is an asymmetric dimethylarginine; alternate (arginine 2337). Arginine 2337 bears the Omega-N-methylarginine; alternate mark. Residues serine 2347, serine 2351, and serine 2360 each carry the phosphoserine modification. Threonine 2362 carries the phosphothreonine modification. A phosphoserine mark is found at serine 2365, serine 2368, serine 2381, serine 2384, serine 2404, and serine 2408. Polar residues-rich tracts occupy residues phenylalanine 2410–aspartate 2443 and threonine 2467–alanine 2476. Residues serine 2487–serine 2521 show a composition bias toward low complexity. A Phosphoserine modification is found at serine 2535. Phosphothreonine is present on threonine 2537. A Glycyl lysine isopeptide (Lys-Gly) (interchain with G-Cter in SUMO2) cross-link involves residue lysine 2541. Threonine 2553 bears the Phosphothreonine mark. Residues serine 2562 to serine 2602 show a composition bias toward low complexity. A compositionally biased stretch (pro residues) spans proline 2605–proline 2622. 10 positions are modified to phosphoserine: serine 2618, serine 2629, serine 2631, serine 2638, serine 2642, serine 2644, serine 2646, serine 2648, serine 2656, and serine 2660. Basic and acidic residues predominate over residues proline 2623–arginine 2643. Threonine 2689 carries the post-translational modification Phosphothreonine. Phosphoserine is present on serine 2691. Over residues serine 2694–proline 2703 the composition is skewed to basic residues.

It belongs to the CWC21 family. In terms of assembly, component of pre-catalytic, catalytic and post-catalytic spliceosome complexes. Found in a pre-mRNA splicing complex with SFRS4, SFRS5, SNRP70, SNRPA1, SRRM1 and SRRM2. Component of the minor spliceosome, which splices U12-type introns. Interacts with DHX8. Interacts with CACTIN.

It is found in the nucleus. The protein localises to the nucleus speckle. Its function is as follows. Required for pre-mRNA splicing as component of the spliceosome. As a component of the minor spliceosome, involved in the splicing of U12-type introns in pre-mRNAs. This Mus musculus (Mouse) protein is Serine/arginine repetitive matrix protein 2 (Srrm2).